Consider the following 479-residue polypeptide: Ammonium transporter Rh type C (479 aa).

Topologically, residues 1–9 (MAWNTNLRW) are cytoplasmic. The chain crosses the membrane as a helical span at residues 10-30 (RLPLTCLLLQVIMVILFGVFV). Topologically, residues 31-60 (RYDFEADAHWWSERTHKNLSDMENEFYYRY) are extracellular. N48 carries an N-linked (GlcNAc...) asparagine glycan. The chain crosses the membrane as a helical span at residues 61-81 (PSFQDVHVMVFVGFGFLMTFL). Topologically, residues 82 to 85 (QRYG) are cytoplasmic. Residues 86–106 (FSAVGFNFLLAAFGIQWALLM) traverse the membrane as a helical segment. The Extracellular portion of the chain corresponds to 107–123 (QGWFHFLQDRYIVVGVE). The chain crosses the membrane as a helical span at residues 124–144 (NLINADFCVASVCVAFGAVLG). Over 145 to 148 (KVSP) the chain is Cytoplasmic. The chain crosses the membrane as a helical span at residues 149-169 (IQLLIMTFFQVTLFAVNEFIL). The Extracellular portion of the chain corresponds to 170–177 (LNLLKVKD). Residues 178 to 200 (AGGSMTIHTFGAYFGLTVTRILY) traverse the membrane as a helical segment. Over 201–218 (RRNLEQSKERQNSVYQSD) the chain is Cytoplasmic. The helical transmembrane segment at 219–239 (LFAMIGTLFLWMYWPSFNSAI) threads the bilayer. Topologically, residues 240–250 (SYHGDSQHRAA) are extracellular. The chain crosses the membrane as a helical span at residues 251–271 (INTYCSLAACVLTSVAISSAL). At 272-281 (HKKGKLDMVH) the chain is on the cytoplasmic side. Residues 282–302 (IQNATLAGGVAVGTAAEMMLM) form a helical membrane-spanning segment. A topological domain (extracellular) is located at residue P303. The chain crosses the membrane as a helical span at residues 304–324 (YGALIIGFVCGIISTLGFVYL). Over 325 to 345 (TPFLESRLHIQDTCGINNLHG) the chain is Cytoplasmic. A helical membrane pass occupies residues 346 to 366 (IPGIIGGIVGAVTAASASLEV). At 367–394 (YGKEGLVHSFDFQGFNGDWTARTQGKFQ) the chain is on the extracellular side. The helical transmembrane segment at 395-415 (IYGLLVTLAMALMGGIIVGLI) threads the bilayer. The Cytoplasmic segment spans residues 416–479 (LRLPFWGQPS…PMASSVPLVP (64 aa)).

This sequence belongs to the ammonium transporter (TC 2.A.49) family. Rh subfamily. Homotrimer. In terms of processing, N-glycosylated. As to expression, expressed in brain, testis, placenta, pancreas, esophagus and prostate. Expressed in squamous epithelial tissues (at protein level). Expressed in kidney.

Its subcellular location is the cell membrane. It is found in the apical cell membrane. The catalysed reaction is NH4(+)(in) = NH4(+)(out). It carries out the reaction methylamine(out) = methylamine(in). It catalyses the reaction CO2(out) = CO2(in). Functionally, ammonium transporter involved in the maintenance of acid-base homeostasis. Transports ammonium and its related derivative methylammonium across the plasma membrane of epithelial cells likely contributing to renal transepithelial ammonia transport and ammonia metabolism. Postulated to primarily mediate an electroneutral bidirectional transport of NH3 ammonia species according to a mechanism that implies interaction of an NH4(+) ion with acidic residues of the pore entry followed by dissociation of NH4(+) into NH3 and H(+). As a result NH3 transits through the central pore and is protonated on the extracellular side reforming NH4(+). May act as a CO2 channel providing for renal acid secretion. The chain is Ammonium transporter Rh type C (RHCG) from Homo sapiens (Human).